Reading from the N-terminus, the 500-residue chain is Cytochrome P450 2D14 (500 aa).

C446 provides a ligand contact to heme.

It belongs to the cytochrome P450 family. The cofactor is heme.

The protein localises to the endoplasmic reticulum membrane. It is found in the microsome membrane. It catalyses the reaction an organic molecule + reduced [NADPH--hemoprotein reductase] + O2 = an alcohol + oxidized [NADPH--hemoprotein reductase] + H2O + H(+). Cytochromes P450 are a group of heme-thiolate monooxygenases. In liver microsomes, this enzyme is involved in an NADPH-dependent electron transport pathway. It oxidizes a variety of structurally unrelated compounds, including steroids, fatty acids, and xenobiotics. In Bos taurus (Bovine), this protein is Cytochrome P450 2D14 (CYP2D14).